A 434-amino-acid polypeptide reads, in one-letter code: MLGAVKMEGHEATDWSSYYGEAEAYSSVGNMNAGLSMNPMNTYMSMSAMRTSANMTASSMNMSYVNTGMSPSLTGMSPGTGAMTGMGTGVPSMASHLSPSMIPMSAQTTAMNALAPYTNINSMSPIYGQSNINRSRDPKTYRRSYTHAKPPYSYISLITMAIQQSPNKMLTLSEIYQWIMDLFPFYRQNQQRWQNSIRHSLSFNDCFLKVPRSPDKPGKGSFWTLHPDSGNMFENGCYLRRQKRFKCEKKPSLREGGGKKLSEGASSVGSAANSSSESSVGNESPHSSSSPCQEQKRSLVDMKSSQGLSPKHATSPASQAQHLLSQHHSVLSHEAQSHLKPEHHYSFNHPFSINNLMSSEQQHHHHHHHNHHHHHKMDLKAYEQVMHYSSYGSPMAGSLAMSTVTNKSGLESSPITSDTSYYQGGYSRPIMNSS.

Residues 149 to 243 (KPPYSYISLI…ENGCYLRRQK (95 aa)) constitute a DNA-binding region (fork-head). Positions 249–262 (KKPSLREGGGKKLS) are enriched in basic and acidic residues. 2 disordered regions span residues 249 to 339 (KKPS…QSHL) and 408 to 434 (SGLESSPITSDTSYYQGGYSRPIMNSS). Low complexity-rich tracts occupy residues 263 to 291 (EGASSVGSAANSSSESSVGNESPHSSSSP) and 317 to 333 (ASQAQHLLSQHHSVLSH). Positions 408-422 (SGLESSPITSDTSYY) are enriched in polar residues.

As to expression, at gastrula stage, expressed in both the anterior and posterior endoderm, with endodermal expression persisting into early tailbud stages. Expression is absent in gastrula stage ectoderm. During tailbud stages, expressed in the pharyngeal region, the neural floor plate, the midbrain, hindbrain and in cranial neural crest cells. Expressed in the foregut of hatching larvae. In tadpoles, expressed in the pharyngeal pouches and in other anterior endodermal regions. Within the tadpole nervous system, expressed in the neural floor plate, at high levels in the ventral midbrain and hindbrain, and at lower levels in the spinal cord. Expressed in the adult lung and brain.

Its subcellular location is the nucleus. Acts as a transcriptional activator during early development, limiting the extent of mesoderm formation in the gastrula. Binds to DNA via the target sequence 5'-GT[AC]AACA-3', with 5'-GTAAACA-3' being the preferred binding site. The chain is Forkhead box protein A2-A (foxa2-a) from Xenopus laevis (African clawed frog).